The following is a 919-amino-acid chain: MKIRNYIIIAISVILLVVFSLSRTLVHLLTEAWWFNTVDFANIFWTRLNWQIFLWVGAFVIYFLFLWSNYWIAEKLTSDRSFNILLGTELAPYRNIFVKIIFLVNITLISLSAATATSPAWETFLKFLNAVDFPNQDPIYQRNIGFYIFRLPLYEGIKEWLFTLVFAGLIISIIVYALKGKFTAGRQWQNFLTGSIKTHISLLLAGVTILIAVGFWFERYELLFDSNGVVFGAGYTDVHAKLFAYWAMAIVALLLAVVCVLSVWKNNIIWPTYGIVIYIVLLGLFNVLYPWFQQKFIVNPNELQKEKPYIANNIKFTREAYGLDNVETKSFPAKFELDSQTLKNNQGTVRNITLWDYRPLLSTYRQLQEMRLYYQFNDVDIDRYTIDGNYRQVMLSPREMVYSQVPRKAQTWVNKHLKYTHGYGLVMNPVNEVKADGLPVLFIKDIPPVSQVNLQVKEPAIYYGEKTDTHIFTGMSTEEFDYPRSGENAFTFYSGTGGVPVNSLWRKLAYAYDLSSINILISGYFTDNSKIHYYRNIKERVNQVAPFLRFDNDPYIALIDGKIQWILDAYTVSDRYPYSEPLYLSNNARAILNRGNIERIARGNVNYIRNSVKVMVDAYNGTMKFFVVDENDPVLNTYRKIFPQLFTEKSAIPTNVKAHFRYPLDLFKIKAQMYLSYHMSNPQLFYNQEDLWRFPTEVYEDNKQLMEPYYLIMRLPEKKGEEFVLILPFTPVNKDNMIAWMAAESDGDNYGKLLLYEFPKQKLVYGPSQIEARIDQNPKISQQLTLWSQKGSKVIRGDLLVIPIEESLMYIEPIYLRAEQGELPELKRVIVAYDKEVVMTETLSKSLETIFGMEVKQPEVKVTEKTPETKNISELINSIVEAYSQTEAARRKDNWVEYGKSKQKFEQLLQQLKKQTESN.

The next 7 helical transmembrane spans lie at 6-26, 52-72, 96-116, 160-180, 198-218, 243-263, and 268-288; these read YIII…RTLV, IFLW…NYWI, IFVK…AATA, WLFT…ALKG, THIS…FWFE, FAYW…VLSV, and IIWP…FNVL.

It belongs to the UPF0182 family.

It is found in the cell membrane. This chain is UPF0182 protein Tery_4385, found in Trichodesmium erythraeum (strain IMS101).